A 360-amino-acid polypeptide reads, in one-letter code: DNA replication and repair protein RecF (360 aa).

30–37 serves as a coordination point for ATP; that stretch reads GANGSGKT.

The protein belongs to the RecF family.

The protein localises to the cytoplasm. In terms of biological role, the RecF protein is involved in DNA metabolism; it is required for DNA replication and normal SOS inducibility. RecF binds preferentially to single-stranded, linear DNA. It also seems to bind ATP. This chain is DNA replication and repair protein RecF, found in Acinetobacter baumannii (strain SDF).